Consider the following 419-residue polypeptide: Zinc metalloprotease RasP (419 aa).

4 helical membrane-spanning segments follow: residues V4–I24, I173–L193, L349–D369, and E391–W411. H18 contributes to the Zn(2+) binding site. E19 is an active-site residue. A Zn(2+)-binding site is contributed by H22. In terms of domain architecture, PDZ spans A184–A269.

The protein belongs to the peptidase M50B family. Zn(2+) is required as a cofactor.

The protein resides in the cell membrane. In terms of biological role, is responsible for Site-2 cleavage of the RsiW anti-sigma factor. This results, after a third proteolytic step catalyzed by the ClpXP protease, in the release of SigW and the transcription activation of the genes under the control of the sigma-W factor. The sequence is that of Zinc metalloprotease RasP (rasP) from Bacillus licheniformis (strain ATCC 14580 / DSM 13 / JCM 2505 / CCUG 7422 / NBRC 12200 / NCIMB 9375 / NCTC 10341 / NRRL NRS-1264 / Gibson 46).